The chain runs to 108 residues: Transmembrane protein 141 (108 aa).

A run of 2 helical transmembrane segments spans residues 32–52 (MKGV…QMFI) and 58–78 (YPLQ…SYGV).

This sequence belongs to the TMEM141 family.

The protein resides in the membrane. This is Transmembrane protein 141 (TMEM141) from Homo sapiens (Human).